The primary structure comprises 208 residues: Uracil phosphoribosyltransferase (208 aa).

Residues R78, R103, and 130–138 (DPMLATGGS) contribute to the 5-phospho-alpha-D-ribose 1-diphosphate site. Uracil-binding positions include I193 and 198 to 200 (GDA). Residue D199 participates in 5-phospho-alpha-D-ribose 1-diphosphate binding.

Belongs to the UPRTase family. Mg(2+) serves as cofactor.

The catalysed reaction is UMP + diphosphate = 5-phospho-alpha-D-ribose 1-diphosphate + uracil. It functions in the pathway pyrimidine metabolism; UMP biosynthesis via salvage pathway; UMP from uracil: step 1/1. Allosterically activated by GTP. Its function is as follows. Catalyzes the conversion of uracil and 5-phospho-alpha-D-ribose 1-diphosphate (PRPP) to UMP and diphosphate. This Roseiflexus sp. (strain RS-1) protein is Uracil phosphoribosyltransferase.